Reading from the N-terminus, the 670-residue chain is Pescadillo homolog (670 aa).

A coiled-coil region spans residues 292–321; that stretch reads GANQAQAKVKEAESKRSLMEEELLKVRELF. One can recognise a BRCT domain in the interval 316–402; sequence KVRELFRGLT…QMLPVTGYRI (87 aa). The disordered stretch occupies residues 643–670; that stretch reads RQRAEAKGKKLKEKKADNPYKKLPKWVQ. Residues 644-662 are compositionally biased toward basic and acidic residues; it reads QRAEAKGKKLKEKKADNPY.

Belongs to the pescadillo family.

It is found in the nucleus. The protein localises to the nucleolus. It localises to the nucleoplasm. Its function is as follows. Required for maturation of ribosomal RNAs and formation of the large ribosomal subunit. This is Pescadillo homolog from Leishmania braziliensis.